Reading from the N-terminus, the 268-residue chain is Hydroxyethylthiazole kinase (268 aa).

Residue Met-46 coordinates substrate. Residues Arg-122 and Thr-168 each contribute to the ATP site. Gly-195 is a binding site for substrate.

It belongs to the Thz kinase family. Requires Mg(2+) as cofactor.

It carries out the reaction 5-(2-hydroxyethyl)-4-methylthiazole + ATP = 4-methyl-5-(2-phosphooxyethyl)-thiazole + ADP + H(+). It functions in the pathway cofactor biosynthesis; thiamine diphosphate biosynthesis; 4-methyl-5-(2-phosphoethyl)-thiazole from 5-(2-hydroxyethyl)-4-methylthiazole: step 1/1. Its function is as follows. Catalyzes the phosphorylation of the hydroxyl group of 4-methyl-5-beta-hydroxyethylthiazole (THZ). The sequence is that of Hydroxyethylthiazole kinase from Desulfatibacillum aliphaticivorans.